The primary structure comprises 107 residues: Protein Asterix (107 aa).

The span at 1–15 shows a compositional bias: polar residues; the sequence is MSHSHGNASSVNDPR. The segment at 1-25 is disordered; sequence MSHSHGNASSVNDPRQPSAAKPYIP. The chain crosses the membrane as a helical span at residues 82–98; that stretch reads ISMAMMFAIMGLVTNYL.

Belongs to the Asterix family.

It is found in the membrane. The sequence is that of Protein Asterix from Arabidopsis thaliana (Mouse-ear cress).